Reading from the N-terminus, the 977-residue chain is Protein bric-a-brac 1 (977 aa).

Residues 1-97 form a disordered region; the sequence is MASAQAETNV…RSSSVASPSS (97 aa). Residues 34–43 show a composition bias toward polar residues; sequence PKSNRSSPTQ. Positions 44–69 are enriched in basic and acidic residues; that stretch reads QEEKRIKSEDRTSPTGGAKDEDKESQ. Positions 80 to 97 are enriched in low complexity; it reads SPVSSPQGRSSSVASPSS. The 66-residue stretch at 127–192 folds into the BTB domain; the sequence is VDVTLACDGR…MYRGEINVSQ (66 aa). 4 disordered regions span residues 221 to 249, 281 to 348, 362 to 434, and 447 to 497; these read AAAA…HDRE, ERQQ…GSTV, DMPS…RFPL, and SGLG…ADDL. The span at 316 to 330 shows a compositional bias: basic and acidic residues; the sequence is ERMELEQKERERQRD. A compositionally biased stretch (low complexity) spans 372–396; that stretch reads PLSRSSRPHSQSPQQQQAQQQGQLP. The span at 469 to 491 shows a compositional bias: gly residues; it reads GGGVGGGGVGGGGAGGVGSGGGS. The 53-residue stretch at 559–611 folds into the HTH psq-type domain; it reads FRERGPLKSWRPETMAEAIFSVLKEGLSLSQAARKYDIPYPTFVLYANRVHNM. The segment at residues 569–614 is a DNA-binding region (H-T-H motif); the sequence is RPETMAEAIFSVLKEGLSLSQAARKYDIPYPTFVLYANRVHNMLGP. The segment at residues 621–632 is a DNA-binding region (a.T hook); sequence DLRPKGRGRPQR. Disordered regions lie at residues 772 to 900 and 925 to 977; these read ASIS…LGDL and VGAS…TTSE. 4 stretches are compositionally biased toward low complexity: residues 804–816, 838–853, 862–872, and 925–966; these read MAVA…QQQA, QQQQ…GGHQ, ASSSSSASSSS, and VGAS…SSGG.

Leg imaginal disk at the central region of the tarsus and in eye antenna disk at the basal cylinder.

The protein localises to the nucleus. Its function is as follows. Probably acts as a transcriptional regulator. Required for the specification of the tarsal segment. Also involved in antenna development. This is Protein bric-a-brac 1 (bab1) from Drosophila melanogaster (Fruit fly).